A 51-amino-acid chain; its full sequence is Large ribosomal subunit protein eL39 (51 aa).

Belongs to the eukaryotic ribosomal protein eL39 family.

In Pyrobaculum islandicum (strain DSM 4184 / JCM 9189 / GEO3), this protein is Large ribosomal subunit protein eL39.